Here is a 243-residue protein sequence, read N- to C-terminus: Small ribosomal subunit protein uS5 (243 aa).

Residues 1-54 (MSDNEKETQVAEETQNTQATAESSNNDERRGRRNNRGGEGRRGDRRGRREDNHE) are disordered. Polar residues predominate over residues 11–24 (AEETQNTQATAESS). Basic and acidic residues predominate over residues 26–54 (NDERRGRRNNRGGEGRRGDRRGRREDNHE). In terms of domain architecture, S5 DRBM spans 57–120 (MLDRVVTINR…LDAKKHLFNV (64 aa)).

The protein belongs to the universal ribosomal protein uS5 family. In terms of assembly, part of the 30S ribosomal subunit. Contacts proteins S4 and S8.

In terms of biological role, with S4 and S12 plays an important role in translational accuracy. Located at the back of the 30S subunit body where it stabilizes the conformation of the head with respect to the body. This chain is Small ribosomal subunit protein uS5, found in Bifidobacterium animalis subsp. lactis (strain AD011).